The primary structure comprises 211 residues: Urease accessory protein UreF (211 aa).

A disordered region spans residues 71-93; the sequence is DDADRETDARTPAPAARHASRSQ.

It belongs to the UreF family. As to quaternary structure, ureD, UreF and UreG form a complex that acts as a GTP-hydrolysis-dependent molecular chaperone, activating the urease apoprotein by helping to assemble the nickel containing metallocenter of UreC. The UreE protein probably delivers the nickel.

It localises to the cytoplasm. Its function is as follows. Required for maturation of urease via the functional incorporation of the urease nickel metallocenter. This chain is Urease accessory protein UreF, found in Mycobacterium bovis (strain ATCC BAA-935 / AF2122/97).